The following is a 656-amino-acid chain: Pyoverdine export ATP-binding/permease protein PvdT (656 aa).

The 240-residue stretch at 6 to 245 folds into the ABC transporter domain; the sequence is IDLRGIRKSY…SANPAALQAV (240 aa). 43–50 serves as a coordination point for ATP; the sequence is GASGSGKS. 4 consecutive transmembrane segments (helical) span residues 284 to 304, 538 to 558, 589 to 609, and 619 to 639; these read ALTL…LAVG, IAAI…LMTV, LSVV…AALL, and LSAV…FGFM.

It belongs to the ABC transporter superfamily. Macrolide exporter (TC 3.A.1.122) family. In terms of assembly, part of the tripartite efflux system PvdRT-OpmQ, which is composed of an inner membrane component with both ATPase and permease domains, PvdT, a periplasmic membrane fusion protein, PvdR, and an outer membrane component, OpmQ.

It localises to the cell inner membrane. Part of the tripartite efflux system PvdRT-OpmQ required for the secretion into the extracellular milieu of the siderophore pyoverdine (PVD), which is involved in iron acquisition. This subunit binds PVD and drives its secretion by hydrolyzing ATP. The system is responsible for export of newly synthesized PVD after the final steps of biosynthesis have taken place in the periplasm. It is also responsible for recycling of PVD after internalization of ferri-PVD into the periplasm by the outer-membrane receptor FpvA and release of iron from PVD, thus making PVD available for new cycles of iron uptake. The chain is Pyoverdine export ATP-binding/permease protein PvdT from Pseudomonas syringae pv. tomato (strain ATCC BAA-871 / DC3000).